Reading from the N-terminus, the 288-residue chain is ATP synthase gamma chain (288 aa).

Belongs to the ATPase gamma chain family. F-type ATPases have 2 components, CF(1) - the catalytic core - and CF(0) - the membrane proton channel. CF(1) has five subunits: alpha(3), beta(3), gamma(1), delta(1), epsilon(1). CF(0) has three main subunits: a, b and c.

It is found in the cell membrane. Its function is as follows. Produces ATP from ADP in the presence of a proton gradient across the membrane. The gamma chain is believed to be important in regulating ATPase activity and the flow of protons through the CF(0) complex. This is ATP synthase gamma chain from Staphylococcus epidermidis (strain ATCC 35984 / DSM 28319 / BCRC 17069 / CCUG 31568 / BM 3577 / RP62A).